Consider the following 92-residue polypeptide: MKFEAVVRTEQGKGASRRLRHAGQFPAIVYGGTEAPVSIALDHDAVINQMDKPAFYEAIELVIDGAVVKVKPQDVQRHAFKPKVEHMDFIRI.

Belongs to the bacterial ribosomal protein bL25 family. Part of the 50S ribosomal subunit; part of the 5S rRNA/L5/L18/L25 subcomplex. Contacts the 5S rRNA. Binds to the 5S rRNA independently of L5 and L18.

Functionally, this is one of the proteins that binds to the 5S RNA in the ribosome where it forms part of the central protuberance. The polypeptide is Large ribosomal subunit protein bL25 (Aliivibrio fischeri (strain MJ11) (Vibrio fischeri)).